A 193-amino-acid polypeptide reads, in one-letter code: 21 kDa protein (193 aa).

The first 22 residues, 1–22 (MKLSKSTLVFSALLVILAAASA), serve as a signal peptide directing secretion.

The sequence is that of 21 kDa protein from Daucus carota (Wild carrot).